Here is a 688-residue protein sequence, read N- to C-terminus: MFKKLFGQLQRIGKALMLPVAILPAAGILLAFGNAMHNEQLVEIAPWLKNDIIVMISSVMEAAGQVVFDNLPLLFAVGTALGLAGGDGVAALAALVGYLIMNATMGKVLHITIDDIFSYAKGAKELSQAAKEPAHALVLGIPTLQTGVFGGIIMGALAAWCYNKFYNITLPPFLGFFAGKRFVPIVTSVVAIATGVVLSFAWPPIQDGLNSLSNFLLNKNLTLTTFIFGIIERSLIPFGLHHIFYSPFWFEFGSYTNHAGELVRGDQRIWMAQLKDGVPFTAGAFTTGKYPFMMFGLPAAAFAIYKNARPERKKIVGGLMLSAGLTAFLTGITEPLEFSFLFVAPVLYGIHVLLAGTSFLVMHLLGVKIGMTFSGGFIDYILYGLLNWDRSHALLVIPVGIVYAIVYYFLFDFAIRKFKLKTPGREDEETEIRNSSVAKLPFDVLDAMGGKENIKHLDACITRLRVEVVDKSKVDVAGIKALGASGVLEVGNNMQAIFGPKSDQIKHDMAKIMSGEITKPSETTVTEEMSDEPVHVEALGTTDIYAPGVGQIIPLSEVPDQVFAGKMMGDGVGFIPEKGEIVAPFDGTVKTIFPTKHAIGLESESGVEVLIHIGIDTVKLNGEGFESLINVDEKVTQGQPLMKVNLAYLKAHAPSIVTPMIITNLENKELVIEDVQDADPGKLIMTVK.

A PTS EIIC type-1 domain is found at 3–427; that stretch reads KKLFGQLQRI…FKLKTPGRED (425 aa). A run of 10 helical transmembrane segments spans residues 12–32, 81–101, 137–157, 182–202, 223–243, 284–304, 315–335, 340–360, 364–384, and 395–415; these read IGKALMLPVAILPAAGILLAF, LGLAGGDGVAALAALVGYLIM, LVLGIPTLQTGVFGGIIMGAL, FVPIVTSVVAIATGVVLSFAW, LTTFIFGIIERSLIPFGLHHI, AFTTGKYPFMMFGLPAAAFAI, IVGGLMLSAGLTAFLTGITEP, FLFVAPVLYGIHVLLAGTSFL, LLGVKIGMTFSGGFIDYILYG, and LVIPVGIVYAIVYYFLFDFAI. Residues 438–519 form the PTS EIIB type-1 domain; sequence AKLPFDVLDA…AKIMSGEITK (82 aa). The active-site Phosphocysteine intermediate; for EIIB activity is cysteine 460. The PTS EIIA type-1 domain maps to 560–664; that stretch reads DQVFAGKMMG…SIVTPMIITN (105 aa). The Tele-phosphohistidine intermediate; for EIIA activity role is filled by histidine 612.

The protein resides in the cell membrane. In terms of biological role, the phosphoenolpyruvate-dependent sugar phosphotransferase system (sugar PTS), a major carbohydrate active -transport system, catalyzes the phosphorylation of incoming sugar substrates concomitantly with their translocation across the cell membrane. This system is involved in alpha- and beta-glucoside transport. The sequence is that of PTS system glucoside-specific EIICBA component (glcB) from Staphylococcus aureus (strain MRSA252).